Here is a 68-residue protein sequence, read N- to C-terminus: MKTQIVILIVAVLFLQLVSQSDAFLKGIIDTVSNWLGKRGLKNLDQYNDLFDGEISDADIKFLKDLMR.

Positions 1-23 (MKTQIVILIVAVLFLQLVSQSDA) are cleaved as a signal peptide. At L36 the chain carries Leucine amide. A propeptide spanning residues 40–68 (GLKNLDQYNDLFDGEISDADIKFLKDLMR) is cleaved from the precursor.

Belongs to the non-disulfide-bridged peptide (NDBP) superfamily. Short antimicrobial peptide (group 4) family. Expressed by the venom gland.

It is found in the secreted. The protein resides in the target cell membrane. Amphipathic peptide that shows no antibacterial activity even at 50 uM but shows a low hemolytic activity against human erythrocytes. The chain is Amphipathic peptide CT1 from Mesomexovis subcristatus (Scorpion).